We begin with the raw amino-acid sequence, 184 residues long: Type-1 fimbrial protein, A chain (184 aa).

Positions 1–22 (MKHKLMTSTIASLMFVAGAAVA) are cleaved as a signal peptide. A disulfide bond links Cys46 and Cys86.

This sequence belongs to the fimbrial protein family.

It is found in the fimbrium. Functionally, fimbriae (also called pili), polar filaments radiating from the surface of the bacterium to a length of 0.5-1.5 micrometers and numbering 100-300 per cell, enable bacteria to colonize the epithelium of specific host organs. This is Type-1 fimbrial protein, A chain (fimA) from Salmonella typhi.